The primary structure comprises 207 residues: Large ribosomal subunit protein uL4 (207 aa).

The tract at residues 48-86 (THKVKNRSEVRGGGRKPWRQKGTGRARQGSIRSPQWRGG) is disordered. Over residues 60–71 (GGRKPWRQKGTG) the composition is skewed to basic residues.

Belongs to the universal ribosomal protein uL4 family. In terms of assembly, part of the 50S ribosomal subunit.

In terms of biological role, one of the primary rRNA binding proteins, this protein initially binds near the 5'-end of the 23S rRNA. It is important during the early stages of 50S assembly. It makes multiple contacts with different domains of the 23S rRNA in the assembled 50S subunit and ribosome. Its function is as follows. Forms part of the polypeptide exit tunnel. The chain is Large ribosomal subunit protein uL4 from Bacillus licheniformis (strain ATCC 14580 / DSM 13 / JCM 2505 / CCUG 7422 / NBRC 12200 / NCIMB 9375 / NCTC 10341 / NRRL NRS-1264 / Gibson 46).